Reading from the N-terminus, the 243-residue chain is uncharacterized protein (243 aa).

This is an uncharacterized protein from Caenorhabditis elegans.